Reading from the N-terminus, the 378-residue chain is Erythronate-4-phosphate dehydrogenase (378 aa).

Substrate-binding residues include Ser45 and Thr66. 2 residues coordinate NAD(+): Asp146 and Thr175. Arg208 is an active-site residue. Position 232 (Asp232) interacts with NAD(+). The active site involves Glu237. Residue His254 is the Proton donor of the active site. NAD(+) is bound at residue Gly257. Tyr258 provides a ligand contact to substrate.

This sequence belongs to the D-isomer specific 2-hydroxyacid dehydrogenase family. PdxB subfamily. In terms of assembly, homodimer.

It is found in the cytoplasm. It carries out the reaction 4-phospho-D-erythronate + NAD(+) = (R)-3-hydroxy-2-oxo-4-phosphooxybutanoate + NADH + H(+). The protein operates within cofactor biosynthesis; pyridoxine 5'-phosphate biosynthesis; pyridoxine 5'-phosphate from D-erythrose 4-phosphate: step 2/5. Catalyzes the oxidation of erythronate-4-phosphate to 3-hydroxy-2-oxo-4-phosphonooxybutanoate. In Enterobacter sp. (strain 638), this protein is Erythronate-4-phosphate dehydrogenase.